A 294-amino-acid chain; its full sequence is Cell division protein ZipA (294 aa).

Residue Met1 is a topological domain, periplasmic. The helical transmembrane segment at 2–22 (EIGLREWLILIGIIVIAGILF) threads the bilayer. Over 23–294 (DGWRRMRGGK…FERRALTQKR (272 aa)) the chain is Cytoplasmic. The tract at residues 47–107 (PDEEGSAEVL…GKRAAEMQPQ (61 aa)) is disordered. Positions 82–91 (AREREREQKP) are enriched in basic and acidic residues.

This sequence belongs to the ZipA family. Interacts with FtsZ via their C-terminal domains.

Its subcellular location is the cell inner membrane. In terms of biological role, essential cell division protein that stabilizes the FtsZ protofilaments by cross-linking them and that serves as a cytoplasmic membrane anchor for the Z ring. Also required for the recruitment to the septal ring of downstream cell division proteins. The chain is Cell division protein ZipA from Pseudomonas putida (strain W619).